Reading from the N-terminus, the 223-residue chain is Cutinase 4 (223 aa).

The N-terminal stretch at 1-26 (MPLPLLPPLLLPLEALLDLALHLVDS) is a signal peptide. A disulfide bridge connects residues C60 and C133. S144 acts as the Nucleophile in catalysis. An intrachain disulfide couples C187 to C194. D191 is an active-site residue. The active-site Proton donor/acceptor is the H203.

The protein belongs to the cutinase family. In terms of processing, the 2 disulfide bonds play a critical role in holding the catalytic residues in juxta-position; reduction of the disulfide bridges results in the complete inactivation of the enzyme.

Its subcellular location is the secreted. The catalysed reaction is cutin + H2O = cutin monomers.. Its function is as follows. Catalyzes the hydrolysis of complex carboxylic polyesters found in the cell wall of plants. Degrades cutin, a macromolecule that forms the structure of the plant cuticle. Also degrades suberin, a specialized macromolecule found in the cell wall of various plant tissues. The protein is Cutinase 4 of Emericella nidulans (strain FGSC A4 / ATCC 38163 / CBS 112.46 / NRRL 194 / M139) (Aspergillus nidulans).